Here is a 215-residue protein sequence, read N- to C-terminus: Abscisic acid receptor PYL6 (215 aa).

Residues 54–209 form an START-like region; it reads HVVGPSQCFS…NLQSLAKLAE (156 aa). A disulfide bridge connects residues Cys61 and Cys190. Abscisate is bound by residues Lys90, 120–125, 147–153, and Glu174; these read AAFSLE and RLMNYKS. Positions 116-120 match the Gate loop motif; sequence SGLPA. Residues 146 to 148 carry the Latch loop motif; that stretch reads HRL.

This sequence belongs to the PYR/PYL/RCAR abscisic acid intracellular receptor family. In terms of assembly, monomer. Homodimer. Binds ABA on one subunit only. Interacts with HAB1, ABI1 and ABI2, and possibly with other PP2Cs. Binds to CARs protein in an ABA-independent manner, both at the plasma membrane and in the nucleus. Interacts directly with CAR1 and CAR4. Interacts with MYC2 in the nucleus. Interaction with MYC2 is increased in the presence of abscisic acid.

The protein localises to the cytoplasm. It localises to the nucleus. It is found in the cell membrane. Its function is as follows. Receptor for abscisic acid (ABA) required for ABA-mediated responses such as stomatal closure and germination inhibition. Inhibits the activity of group-A protein phosphatases type 2C (PP2Cs) in an ABA-independent manner but more efficiently when activated by ABA. Can be activated by both (-)-ABA and (+)-ABA. May link ABA and jasmonate signaling pathways by modifying MYC2 transcriptional activity, and regulation of JAZ6 and JAZ8 gene expression by MYC2. In Arabidopsis thaliana (Mouse-ear cress), this protein is Abscisic acid receptor PYL6 (PYL6).